The sequence spans 189 residues: Ras-like protein 1 (189 aa).

10-17 (GAGGVGKS) contacts GTP. The Effector region signature appears at 32-40 (YDPTIEDSY). GTP-binding positions include 57–61 (DTAGQ) and 116–119 (NKCD). Position 186 is a cysteine methyl ester (Cys186). The S-geranylgeranyl cysteine moiety is linked to residue Cys186. Positions 187–189 (KIL) are cleaved as a propeptide — removed in mature form.

Belongs to the small GTPase superfamily. Ras family.

Its subcellular location is the cell membrane. The enzyme catalyses GTP + H2O = GDP + phosphate + H(+). Alternates between an inactive form bound to GDP and an active form bound to GTP. Activated by a guanine nucleotide-exchange factor (GEF) and inactivated by a GTPase-activating protein (GAP). Ras proteins bind GDP/GTP and possess intrinsic GTPase activity. Plays a role in eye development by regulating cell growth, survival of postmitotic ommatidial cells and differentiation of photoreceptor cells. During larval development, mediates Ptth/tor signaling leading to the production of ecdysone, a hormone required for the initiation of metamorphosis. In Drosophila persimilis (Fruit fly), this protein is Ras-like protein 1.